The chain runs to 34 residues: Photosystem I reaction center subunit XII (34 aa).

The helical transmembrane segment at 5–25 threads the bilayer; the sequence is ISSPEIFIALVVAAHAAILAL.

The protein belongs to the PsaM family.

Its subcellular location is the cellular thylakoid membrane. The chain is Photosystem I reaction center subunit XII from Synechococcus sp. (strain CC9902).